Here is a 405-residue protein sequence, read N- to C-terminus: Maintenance of mitochondrial morphology protein 1 (405 aa).

Residues 1–86 (MQVLNFYVNP…TGSTKSFTQG (86 aa)) are Lumenal-facing. A helical transmembrane segment spans residues 87-107 (LIIGQLSVIILLGIFIKFFVF). The Cytoplasmic segment spans residues 108 to 405 (ADSSTTSSTS…QPVSTTESDH (298 aa)). Positions 166 to 385 (APESLDWFNV…EPRFQVVKLP (220 aa)) constitute an SMP-LTD domain. The interval 303–324 (SEPRVAMDSPQSTRDDNSEEPN) is disordered.

It belongs to the MMM1 family. As to quaternary structure, homodimer. Component of the ER-mitochondria encounter structure (ERMES) or MDM complex, composed of MMM1, MDM10, MDM12 and MDM34. An MMM1 homodimer associates with one molecule of MDM12 on each side in a pairwise head-to-tail manner, and the SMP-LTD domains of MMM1 and MDM12 generate a continuous hydrophobic tunnel for phospholipid trafficking.

The protein resides in the endoplasmic reticulum membrane. Its function is as follows. Component of the ERMES/MDM complex, which serves as a molecular tether to connect the endoplasmic reticulum (ER) and mitochondria. Components of this complex are involved in the control of mitochondrial shape and protein biogenesis, and function in nonvesicular lipid trafficking between the ER and mitochondria. The MDM12-MMM1 subcomplex functions in the major beta-barrel assembly pathway that is responsible for biogenesis of all outer membrane beta-barrel proteins, and acts in a late step after the SAM complex. The MDM10-MDM12-MMM1 subcomplex further acts in the TOM40-specific pathway after the action of the MDM12-MMM1 complex. Essential for establishing and maintaining the structure of mitochondria and maintenance of mtDNA nucleoids. This chain is Maintenance of mitochondrial morphology protein 1, found in Meyerozyma guilliermondii (strain ATCC 6260 / CBS 566 / DSM 6381 / JCM 1539 / NBRC 10279 / NRRL Y-324) (Yeast).